Here is a 413-residue protein sequence, read N- to C-terminus: Chloramphenicol resistance protein CraA (413 aa).

12 helical membrane passes run 18–38 (LMFPLALVLFEFAVYIGNDLI), 55–75 (WAPSSMSFYLLGGASVAWLLG), 84–104 (KKVLLSGVLFFALCCFLILLT), 110–130 (FLTLRFLQGIGLSVISAVGYA), 147–167 (LMANISLLAPLLGPVLGAFLI), 170–190 (VSWHWGFVAIALLALLSWVGL), 228–248 (ALPLVGMPLMLWIALSPIILV), 260–280 (LAQFPVFLGLIVGNIVLIKII), 289–309 (VLIGLPIMLTGTLILILGVVW), 312–332 (YLIPCLLIGMTLICFGEGISF), 349–369 (TVAAAVSMLLMTSFFAMIELV), and 373–393 (YTQFHLWAFVLSAFAFIALWF).

It belongs to the major facilitator superfamily.

It localises to the cell inner membrane. Its function is as follows. Efflux pump that mediates resistance to chloramphenicol. In Acinetobacter baumannii (strain ATCC 19606 / DSM 30007 / JCM 6841 / CCUG 19606 / CIP 70.34 / NBRC 109757 / NCIMB 12457 / NCTC 12156 / 81), this protein is Chloramphenicol resistance protein CraA.